The chain runs to 156 residues: Small ribosomal subunit protein uS7 (156 aa).

Belongs to the universal ribosomal protein uS7 family. In terms of assembly, part of the 30S ribosomal subunit. Contacts proteins S9 and S11.

Its function is as follows. One of the primary rRNA binding proteins, it binds directly to 16S rRNA where it nucleates assembly of the head domain of the 30S subunit. Is located at the subunit interface close to the decoding center, probably blocks exit of the E-site tRNA. In Bacillus licheniformis (strain ATCC 14580 / DSM 13 / JCM 2505 / CCUG 7422 / NBRC 12200 / NCIMB 9375 / NCTC 10341 / NRRL NRS-1264 / Gibson 46), this protein is Small ribosomal subunit protein uS7.